A 27-amino-acid polypeptide reads, in one-letter code: WCKQSGEMCNVLDQNCCDGYCIVFVCT.

Disulfide bonds link Cys2–Cys17, Cys9–Cys21, and Cys16–Cys26.

Belongs to the conotoxin O1 superfamily. As to expression, expressed by the venom duct.

The protein resides in the secreted. Functionally, delta-conotoxins bind to site 6 of voltage-gated sodium channels (Nav) and inhibit the inactivation process. Induces membrane depolarization and spontaneous repetitive firing of neurons. This chain is Delta-conotoxin TxVIB, found in Conus textile (Cloth-of-gold cone).